A 723-amino-acid chain; its full sequence is Probable alpha-fucosidase A (723 aa).

The signal sequence occupies residues 1–15 (MRSLVLLGMSSLATA). N-linked (GlcNAc...) asparagine glycans are attached at residues Asn77, Asn98, Asn117, Asn171, Asn194, Asn243, Asn334, Asn558, Asn566, and Asn595.

It belongs to the glycosyl hydrolase 95 family.

The protein localises to the secreted. It catalyses the reaction an alpha-L-fucoside + H2O = L-fucose + an alcohol. Its function is as follows. Alpha-fucosidase involved in degradation of fucosylated xyloglucans. Hydrolyzes alpha-1,2-linked fucose. This is Probable alpha-fucosidase A (afcA) from Aspergillus oryzae (strain ATCC 42149 / RIB 40) (Yellow koji mold).